The sequence spans 673 residues: UPF0313 protein blr7973 (673 aa).

Residues 332–611 (AWDMIKFSVT…KAFLRYHDPD (280 aa)) form the Radical SAM core domain. [4Fe-4S] cluster-binding residues include Cys346, Cys350, and Cys353. The segment at 632–673 (RPDQLVPAHQPPGTGKAAGTRRPVRPGGKTQRFTTKGLRVMK) is disordered.

Belongs to the UPF0313 family. [4Fe-4S] cluster serves as cofactor.

The polypeptide is UPF0313 protein blr7973 (Bradyrhizobium diazoefficiens (strain JCM 10833 / BCRC 13528 / IAM 13628 / NBRC 14792 / USDA 110)).